The chain runs to 323 residues: MFNFANFYQLIAQDTRLQPWLNVLPQQLTDWQNAEHGDFPRWLKALNKIPEGAPDQIDIKHSVTISNDTPFHQGELKKLESLLRTFHPWRKGPYTVHGIHIDTEWRSDWKWDRVLPHISPLKNRSVLDVGCGNGYHMWRMLGEGARLCVGIDPSHLFLIQFEAIRKLMGGDQRAHLLPLGIEQLPKLEAFDTVFSMGVLYHRRSPLDHLIQLKDQLVSGGELILETLVIEGDETAVLVPKERYAQMRNVYFFPSARALKVWLELVGFEDVRIVDENVTSVDEQRTTNWMTHNSLPDYLDQNDPSKTVEGYPAPRRAILVAKKP.

Carboxy-S-adenosyl-L-methionine contacts are provided by residues lysine 91, tryptophan 105, lysine 110, glycine 130, 152 to 154 (DPS), 181 to 182 (IE), methionine 196, tyrosine 200, and arginine 315.

It belongs to the class I-like SAM-binding methyltransferase superfamily. CmoB family. Homotetramer.

The enzyme catalyses carboxy-S-adenosyl-L-methionine + 5-hydroxyuridine(34) in tRNA = 5-carboxymethoxyuridine(34) in tRNA + S-adenosyl-L-homocysteine + H(+). Functionally, catalyzes carboxymethyl transfer from carboxy-S-adenosyl-L-methionine (Cx-SAM) to 5-hydroxyuridine (ho5U) to form 5-carboxymethoxyuridine (cmo5U) at position 34 in tRNAs. The polypeptide is tRNA U34 carboxymethyltransferase (Vibrio vulnificus (strain CMCP6)).